The following is a 474-amino-acid chain: PTS system N-acetylmuramic acid-specific EIIBC component (474 aa).

Residues 1–89 (MAKEISSELL…SELLGEAPVQ (89 aa)) form the PTS EIIB type-1 domain. The Cytoplasmic segment spans residues 1–123 (MAKEISSELL…LAKFATIFTP (123 aa)). Cys29 functions as the Phosphocysteine intermediate; for EIIB activity in the catalytic mechanism. Residues 115–474 (AKFATIFTPL…LFGCRNVNLD (360 aa)) form the PTS EIIC type-1 domain. A helical membrane pass occupies residues 124–144 (LIPGFIAAGLLLGIATLIATV). Residues 145 to 157 (MHVPADAQGTLPD) are Periplasmic-facing. Residues 158-178 (ALNFMKVFSKGLFTFLVILVG) traverse the membrane as a helical segment. The Cytoplasmic segment spans residues 179-180 (YN). The chain crosses the membrane as a helical span at residues 181-201 (AAQAFGGTGVNGAIIAALFLL). Topologically, residues 202–217 (GYNPAATTGYYAGFHD) are periplasmic. Residues 218 to 238 (FFGLPIDPRGNIIGVLIAAWA) form a helical membrane-spanning segment. Residues 239-260 (CARIEGMVRRFMPDDLDMLLTS) lie on the Cytoplasmic side of the membrane. A helical membrane pass occupies residues 261–281 (LITLLITATLAYLIIMPLGGW). At 282 to 301 (LFEGMSWLFMHLNSNPFGCA) the chain is on the periplasmic side. The helical transmembrane segment at 302–322 (VLAGLFLIAVVFGVHQGFIPV) threads the bilayer. Over 323 to 334 (YLALMDSQGFNS) the chain is Cytoplasmic. Residues 335 to 355 (LFPILSMAGAGQVGAALALYW) traverse the membrane as a helical segment. At 356-368 (RAQPHSALRSQVR) the chain is on the periplasmic side. Residues 369-389 (GAIIPGLLGVGEPLIYGVTLP) traverse the membrane as a helical segment. At 390 to 393 (RMKP) the chain is on the cytoplasmic side. A helical transmembrane segment spans residues 394–414 (FVTACLGGAAGGLFIGLIAWW). Over 415 to 440 (GLPMGLNSAFGPSGLVALPLMTSAQG) the chain is Periplasmic. The helical transmembrane segment at 441-461 (ILPAMAVYAGGILVAWVCGFI) threads the bilayer. Residues 462–474 (FTTLFGCRNVNLD) lie on the Cytoplasmic side of the membrane.

It localises to the cell inner membrane. It carries out the reaction N-acetyl-beta-D-muramate(out) + N(pros)-phospho-L-histidyl-[protein] = N-acetyl-beta-D-muramate 6-phosphate(in) + L-histidyl-[protein]. In terms of biological role, the phosphoenolpyruvate-dependent sugar phosphotransferase system (sugar PTS), a major carbohydrate active transport system, catalyzes the phosphorylation of incoming sugar substrates concomitantly with their translocation across the cell membrane. This system is involved in N-acetylmuramic acid (MurNAc) transport, yielding cytoplasmic MurNAc-6-P. Is responsible for growth on MurNAc as the sole source of carbon and energy. Is also able to take up anhydro-N-acetylmuramic acid (anhMurNAc), but cannot phosphorylate the carbon 6, probably because of the 1,6-anhydro ring. In Escherichia coli (strain K12), this protein is PTS system N-acetylmuramic acid-specific EIIBC component (murP).